We begin with the raw amino-acid sequence, 374 residues long: Queuine tRNA-ribosyltransferase (374 aa).

The active-site Proton acceptor is the aspartate 94. Residues 94–98 (DSGGF), aspartate 148, glutamine 191, and glycine 218 each bind substrate. The RNA binding stretch occupies residues 249–255 (GVGSPDY). The Nucleophile role is filled by aspartate 268. Positions 273-277 (TRIGR) are RNA binding; important for wobble base 34 recognition. Positions 306, 308, 311, and 337 each coordinate Zn(2+).

Belongs to the queuine tRNA-ribosyltransferase family. Homodimer. Within each dimer, one monomer is responsible for RNA recognition and catalysis, while the other monomer binds to the replacement base PreQ1. It depends on Zn(2+) as a cofactor.

The catalysed reaction is 7-aminomethyl-7-carbaguanine + guanosine(34) in tRNA = 7-aminomethyl-7-carbaguanosine(34) in tRNA + guanine. The protein operates within tRNA modification; tRNA-queuosine biosynthesis. In terms of biological role, catalyzes the base-exchange of a guanine (G) residue with the queuine precursor 7-aminomethyl-7-deazaguanine (PreQ1) at position 34 (anticodon wobble position) in tRNAs with GU(N) anticodons (tRNA-Asp, -Asn, -His and -Tyr). Catalysis occurs through a double-displacement mechanism. The nucleophile active site attacks the C1' of nucleotide 34 to detach the guanine base from the RNA, forming a covalent enzyme-RNA intermediate. The proton acceptor active site deprotonates the incoming PreQ1, allowing a nucleophilic attack on the C1' of the ribose to form the product. After dissociation, two additional enzymatic reactions on the tRNA convert PreQ1 to queuine (Q), resulting in the hypermodified nucleoside queuosine (7-(((4,5-cis-dihydroxy-2-cyclopenten-1-yl)amino)methyl)-7-deazaguanosine). The sequence is that of Queuine tRNA-ribosyltransferase from Acetivibrio thermocellus (strain ATCC 27405 / DSM 1237 / JCM 9322 / NBRC 103400 / NCIMB 10682 / NRRL B-4536 / VPI 7372) (Clostridium thermocellum).